The following is an 83-amino-acid chain: Mu-theraphotoxin-Hhn2b 2 (83 aa).

A signal peptide spans 1–21; that stretch reads MKASMFLALAGLVLLFVVCYA. The propeptide occupies 22–48; it reads SESEEKEFPRELISKIFTVDDFKGEER. 3 cysteine pairs are disulfide-bonded: Cys-50/Cys-65, Cys-57/Cys-70, and Cys-64/Cys-77. Leucine amide is present on Leu-81.

The protein belongs to the neurotoxin 10 (Hwtx-1) family. 14 (Hntx-1) subfamily. Monomer. Expressed by the venom gland.

It is found in the secreted. Its function is as follows. Weakly blocks the rat SCN2A/SCN1B (Nav1.2/beta-1) sodium channel (IC(50)=68 uM) and the insect sodium channel para/tipE (IC(50)=4.3 uM), without altering the activation or inactivation kinetics (depressant toxin). This is Mu-theraphotoxin-Hhn2b 2 from Cyriopagopus hainanus (Chinese bird spider).